The sequence spans 517 residues: MGSESLVHVFLVSFPGQGHVNPLLRLGKRLASKGLLVTFTTPESIGKQMRKASNIGEEPSPIGDGFIRFEFFEDGWDEDEPRRQDLDQYLPQLEKVGKEVIPRMIKKNEEQNRPVSCLINNPFIPWVSDVAESLGLPSAMLWVQSCACFAAYYHYYHGLVPFPSESAMEIDVQLPCMPLLKHDEVPSFLYPTTPYPFLRRAIMGQYKNLDKPFCVLMDTFQELEHEIIEYMSKICPIKTVGPLFKNPKAPNANVRGDFMKADDCISWLDSKPPASVVYVSFGSVVYLKQDQWDEIAFGLLNSGLNFLWVMKPPHKDSGYQLLTLPEGFLEKAGDKGKVVQWSPQEQVLAHPSVACFVTHCGWNSSMEALSSGMPVVAFPQWGDQVTDAKYLVDVFKVGVRMCRGEAENKLIMRDVVEKCLLEATVGPKAAEVKENALKWKAAAEAAVAEGGSSDRNIQAFVDEVKRRSIAIQSNKSEPKPVVQNAAVADHFGAKATTNGVAADLAGSNADGKVELVA.

The active-site Proton acceptor is the histidine 19. An anthocyanidin is bound at residue histidine 19. Positions 344, 359, 362, 363, 364, and 367 each coordinate UDP-alpha-D-glucose. Glycine 382 contacts an anthocyanidin. Residues aspartate 383 and glutamine 384 each contribute to the UDP-alpha-D-glucose site.

Belongs to the UDP-glycosyltransferase family. Highly expressed in leaf. Also expressed in peel, stem, root and aril.

It localises to the cytoplasm. The enzyme catalyses 3,4,5-trihydroxybenzoate + UDP-alpha-D-glucose = 1-O-galloyl-beta-D-glucose + UDP. The catalysed reaction is 3,4-dihydroxybenzoate + UDP-alpha-D-glucose = 1-O-(3,4-dihydroxy-benzoyl)-beta-D-glucose + UDP. It catalyses the reaction 4-hydroxybenzoate + UDP-alpha-D-glucose = 4-(beta-D-glucosyloxy)benzoate + UDP + H(+). It carries out the reaction (E)-cinnamate + UDP-alpha-D-glucose = 1-O-(trans-cinnamoyl)-beta-D-glucose + UDP. The enzyme catalyses (E)-sinapate + UDP-alpha-D-glucose = 1-O-(trans-sinapoyl)-beta-D-glucose + UDP. The catalysed reaction is (E)-4-coumarate + UDP-alpha-D-glucose = 1-O-(trans-4-coumaroyl)-beta-D-glucose + UDP. It catalyses the reaction (E)-caffeate + UDP-alpha-D-glucose = 1-O-[(E)-caffeoyl]-beta-D-glucose + UDP. It carries out the reaction (E)-ferulate + UDP-alpha-D-glucose = 1-O-[(E)-feruloyl]-beta-D-glucose + UDP. The enzyme catalyses genistein + UDP-alpha-D-glucose = genistein 7-O-beta-D-glucoside + UDP + H(+). The catalysed reaction is apigenin + UDP-alpha-D-glucose = apigenin 7-O-beta-D-glucoside + UDP + H(+). It catalyses the reaction luteolin + UDP-alpha-D-glucose = luteolin 7-O-beta-D-glucoside + UDP + H(+). In terms of biological role, glucosyltransferase that catalyzes the formation of 1-O-beta-D-glucose esters with hydroxybenzoic acids and cinnamic acid including its derivatives as preferred glucosyl acceptors. Has significant activity with gallic acid (3,4,5-trihydroxybenzoic acid), 3,4-dihydroxybenzoic acid, 4-hydroxybenzoic acid, cinnamic acid, sinapic acid, coumaric acid, caffeic acid and ferulic acid in vitro. Gallic acid is the predicted native substrate of the enzyme, which thus catalyzes the formation of 1-O-galloyl-beta-D-glucose, the first committed step of hydrolyzable tannins (HTs) biosynthesis, with punicalagin isomers being the major HTs of pomegranate. Catalyzes the formation of flavonoid glucosides with genistein, apigenin and luteolin in vitro. Has low activity with benzoic acid, 2-hydroxybenzoic acid, 3-hydroxybenzoic acid, 2,4-dihydroxybenzoic acid, naringenin and quercetin. No activity with catechol, resveratrol, chlorogenic acid, catechin and epicatechin (building blocks of proanthocyanidins) or cyanidin, delphinidin and pelargonidin (the three anthocyanidins). This chain is Gallate 1-beta-glucosyltransferase 84A24, found in Punica granatum (Pomegranate).